Consider the following 74-residue polypeptide: UPF0270 protein NT01EI_3666 (74 aa).

Belongs to the UPF0270 family.

The polypeptide is UPF0270 protein NT01EI_3666 (Edwardsiella ictaluri (strain 93-146)).